Reading from the N-terminus, the 507-residue chain is Myocyte-specific enhancer factor 2A (507 aa).

One can recognise an MADS-box domain in the interval 3–57; it reads RKKIQITRIMDERNRQVTFTKRKFGLMKKAYELSVLCDCEIALIIFNSSNKLFQY. Residues 58-86 constitute a DNA-binding region (mef2-type); the sequence is ASTDMDKVLLKYTEYNEPHESGTNSDIVE. Position 59 is a phosphoserine; by CK2 (serine 59). A phosphoserine mark is found at serine 98 and serine 235. A disordered region spans residues 175-269; the sequence is ADSSMLSPPQ…GGGNLGMNSR (95 aa). The span at 209-245 shows a compositional bias: polar residues; sequence LSTSDLTVPNGAGSSPVGNGFVNSRASPNLVGTTGAN. Residue lysine 249 is modified to N6-acetyllysine. Serine 255 bears the Phosphoserine mark. Residues 266 to 283 are required for interaction with MAPKs; the sequence is MNSRKPDLRVVIPPSSKG. The interval 289–296 is beta domain; that stretch reads SEEEELEL. Phosphothreonine; by MAPK7 and MAPK14 occurs at positions 312 and 319. At serine 355 the chain carries Phosphoserine; by MAPK7. A compositionally biased stretch (polar residues) spans 390–402; sequence SNLSINTNQNINI. Positions 390–507 are disordered; it reads SNLSINTNQN…KRMRMDAWVT (118 aa). Lysine 403 is subject to N6-acetyllysine; alternate. Residue lysine 403 forms a Glycyl lysine isopeptide (Lys-Gly) (interchain with G-Cter in SUMO); alternate linkage. The residue at position 408 (serine 408) is a Phosphoserine; by CDK5. Threonine 415 is subject to Phosphothreonine. A compositionally biased stretch (pro residues) spans 423–443; that stretch reads QPPPPSQAPQPQPPQPQPQPQ. Serine 453 bears the Phosphoserine mark. A compositionally biased stretch (low complexity) spans 453–466; that stretch reads SPVDSLSSSSSSYD. Basic and acidic residues-rich tracts occupy residues 467 to 477 and 488 to 507; these read GSDREDPRGDF and NTEDRESPSVKRMRMDAWVT.

This sequence belongs to the MEF2 family. Binds DNA as a homo- or heterodimer. Dimerizes with MEF2D. Interacts with HDAC7. Interacts with PIAS1; the interaction enhances sumoylation. Interacts with HDAC4, HDAC9 and SLC2A4RG. Interacts (via the N-terminal) with MAPK7; the interaction results in the phosphorylation and transcriptional activity of MEF2A. Constitutive phosphorylation on Ser-408 promotes Lys-403 sumoylation thus preventing acetylation at this site. Dephosphorylation on Ser-408 by PPP3CA upon neuron depolarization promotes a switch from sumoylation to acetylation on residue Lys-403 leading to inhibition of dendrite claw differentiation. Phosphorylation on Thr-312 and Thr-319 are the main sites involved in p38 MAPK signaling and activate transcription. Phosphorylated on these sites by MAPK14/p38alpha and MAPK11/p38beta, but not by MAPK13/p38delta nor by MAPK12/p38gamma. Phosphorylation on Ser-408 by CDK5 induced by neurotoxicity inhibits MEF2A transcriptional activation leading to apoptosis of cortical neurons. Phosphorylation on Thr-312, Thr-319 and Ser-355 can be induced by EGF. In terms of processing, sumoylation on Lys-403 is enhanced by PIAS1 and represses transcriptional activity. Phosphorylation on Ser-408 is required for sumoylation. Has no effect on nuclear location nor on DNA binding. Sumoylated with SUMO1 and, to a lesser extent with SUMO2 and SUMO3. PIASx facilitates sumoylation in postsynaptic dendrites in the cerebellar cortex and promotes their morphogenesis. Post-translationally, acetylation on Lys-403 activates transcriptional activity. Acetylated by p300 on several sites in diffentiating myocytes. Acetylation on Lys-4 increases DNA binding and transactivation. Hyperacetylation by p300 leads to enhanced cardiac myocyte growth and heart failure. Proteolytically cleaved on several sites by caspase 3 and caspase 7 following neurotoxicity. Preferentially cleaves the CDK5-mediated hyperphosphorylated form which leads to cortical neuron apoptosis and transcriptional inactivation.

It localises to the nucleus. Its function is as follows. Transcriptional activator which binds specifically to the MEF2 element, 5'-YTA[AT](4)TAR-3', found in numerous muscle-specific genes. Also involved in the activation of numerous growth factor- and stress-induced genes. Mediates cellular functions not only in skeletal and cardiac muscle development, but also in neuronal differentiation and survival. Plays diverse roles in the control of cell growth, survival and apoptosis via p38 MAPK signaling in muscle-specific and/or growth factor-related transcription. In cerebellar granule neurons, phosphorylated and sumoylated MEF2A represses transcription of NUR77 promoting synaptic differentiation. Associates with chromatin to the ZNF16 promoter. The chain is Myocyte-specific enhancer factor 2A (MEF2A) from Sus scrofa (Pig).